We begin with the raw amino-acid sequence, 443 residues long: UDP-N-acetylmuramoylalanine--D-glutamate ligase (443 aa).

116 to 122 contributes to the ATP binding site; that stretch reads GTNGKST.

This sequence belongs to the MurCDEF family.

It is found in the cytoplasm. The enzyme catalyses UDP-N-acetyl-alpha-D-muramoyl-L-alanine + D-glutamate + ATP = UDP-N-acetyl-alpha-D-muramoyl-L-alanyl-D-glutamate + ADP + phosphate + H(+). It functions in the pathway cell wall biogenesis; peptidoglycan biosynthesis. Cell wall formation. Catalyzes the addition of glutamate to the nucleotide precursor UDP-N-acetylmuramoyl-L-alanine (UMA). The protein is UDP-N-acetylmuramoylalanine--D-glutamate ligase of Novosphingobium aromaticivorans (strain ATCC 700278 / DSM 12444 / CCUG 56034 / CIP 105152 / NBRC 16084 / F199).